A 238-amino-acid chain; its full sequence is Small ribosomal subunit protein eS4 (238 aa).

Residues 38–109 (IPLALVIRDV…DERSYYALVP (72 aa)) enclose the S4 RNA-binding domain.

This sequence belongs to the eukaryotic ribosomal protein eS4 family.

This chain is Small ribosomal subunit protein eS4, found in Pyrobaculum neutrophilum (strain DSM 2338 / JCM 9278 / NBRC 100436 / V24Sta) (Thermoproteus neutrophilus).